The primary structure comprises 308 residues: Tyrosine recombinase XerD (308 aa).

In terms of domain architecture, Core-binding (CB) spans 3–89 (NGFTRLTEQF…SIHEFHRFAL (87 aa)). The Tyr recombinase domain maps to 110–301 (TLPDVLTVDE…SPETLIETYL (192 aa)). Residues R153, K177, H253, R256, and H279 contribute to the active site. Residue Y288 is the O-(3'-phospho-DNA)-tyrosine intermediate of the active site.

Belongs to the 'phage' integrase family. XerD subfamily. Forms a cyclic heterotetrameric complex composed of two molecules of XerC and two molecules of XerD.

Its subcellular location is the cytoplasm. In terms of biological role, site-specific tyrosine recombinase, which acts by catalyzing the cutting and rejoining of the recombining DNA molecules. The XerC-XerD complex is essential to convert dimers of the bacterial chromosome into monomers to permit their segregation at cell division. It also contributes to the segregational stability of plasmids. The protein is Tyrosine recombinase XerD of Bifidobacterium longum (strain NCC 2705).